Consider the following 391-residue polypeptide: Anhydro-N-acetylmuramic acid kinase (391 aa).

9–16 (GTSVDGID) serves as a coordination point for ATP.

It belongs to the anhydro-N-acetylmuramic acid kinase family.

The enzyme catalyses 1,6-anhydro-N-acetyl-beta-muramate + ATP + H2O = N-acetyl-D-muramate 6-phosphate + ADP + H(+). The protein operates within amino-sugar metabolism; 1,6-anhydro-N-acetylmuramate degradation. It functions in the pathway cell wall biogenesis; peptidoglycan recycling. Catalyzes the specific phosphorylation of 1,6-anhydro-N-acetylmuramic acid (anhMurNAc) with the simultaneous cleavage of the 1,6-anhydro ring, generating MurNAc-6-P. Is required for the utilization of anhMurNAc either imported from the medium or derived from its own cell wall murein, and thus plays a role in cell wall recycling. This Gloeothece citriformis (strain PCC 7424) (Cyanothece sp. (strain PCC 7424)) protein is Anhydro-N-acetylmuramic acid kinase.